The sequence spans 452 residues: Alkane uptake protein A (452 aa).

A signal peptide spans 1–36; it reads MSERSVYMVLSPRFSVRAVSLAVAAVSASLSMPTSA.

Belongs to the OmpP1/FadL family. In terms of assembly, interacts with the inner membrane protein AupB.

Its subcellular location is the cell outer membrane. Required for growth on alkanes. Probably involved in the uptake of micelle-solubilized alkanes. The polypeptide is Alkane uptake protein A (Marinobacter nauticus (strain ATCC 49840 / DSM 8798 / CIP 103578 / SP17) (Marinobacter hydrocarbonoclasticus)).